The primary structure comprises 398 residues: Probable peptidoglycan glycosyltransferase FtsW (398 aa).

The Cytoplasmic portion of the chain corresponds to 1–20 (MSTQAIRGARGLVLKWGAGR). Residues 21–41 (FYLDTVLLSVSLGLMLFGFVM) traverse the membrane as a helical segment. Residues 42–57 (VSSASLHLGEKMASDS) lie on the Periplasmic side of the membrane. The helical transmembrane segment at 58–78 (FYFPKHQLVHILLGLAAGWGA) threads the bilayer. At 79–92 (ARVRLDTLERHSRS) the chain is on the cytoplasmic side. Residues 93–113 (LFWAGIALLVLVLIPGVGKSV) traverse the membrane as a helical segment. Residues 114–121 (NGSVRWIN) lie on the Periplasmic side of the membrane. Residues 122–142 (LFGLRVQVSEVFKLVAAIYVA) traverse the membrane as a helical segment. Over 143–153 (GYISRHLDTVR) the chain is Cytoplasmic. Residues 154-174 (TSVKGMIFPLSLLAIGAVLLL) form a helical membrane-spanning segment. Over 175–177 (KEP) the chain is Periplasmic. A helical membrane pass occupies residues 178–198 (DFGATAVVMATALGMLFLAGA). Arginine 199 is a topological domain (cytoplasmic). A helical transmembrane segment spans residues 200-220 (LWVFVGLLGLVAVAGTVLIYT). The Periplasmic portion of the chain corresponds to 221–289 (AEYRLRRVLS…LFSVIGEELG (69 aa)). Residues 290-310 (LWGATTVILLFAIVVWRALAI) traverse the membrane as a helical segment. Residues 311-318 (GRLAERSG) are Cytoplasmic-facing. The helical transmembrane segment at 319-339 (NLFAAFLAYGIGIWLGLQSFI) threads the bilayer. The Periplasmic portion of the chain corresponds to 340-355 (NMGVNMGMLPTKGLTL). A helical membrane pass occupies residues 356 to 376 (PLMSYGGGSMMVVCAAIGLLF). At 377–398 (RIRSEAVASFLGNGRKGLWPGV) the chain is on the cytoplasmic side.

It belongs to the SEDS family. FtsW subfamily.

The protein resides in the cell inner membrane. The catalysed reaction is [GlcNAc-(1-&gt;4)-Mur2Ac(oyl-L-Ala-gamma-D-Glu-L-Lys-D-Ala-D-Ala)](n)-di-trans,octa-cis-undecaprenyl diphosphate + beta-D-GlcNAc-(1-&gt;4)-Mur2Ac(oyl-L-Ala-gamma-D-Glu-L-Lys-D-Ala-D-Ala)-di-trans,octa-cis-undecaprenyl diphosphate = [GlcNAc-(1-&gt;4)-Mur2Ac(oyl-L-Ala-gamma-D-Glu-L-Lys-D-Ala-D-Ala)](n+1)-di-trans,octa-cis-undecaprenyl diphosphate + di-trans,octa-cis-undecaprenyl diphosphate + H(+). The protein operates within cell wall biogenesis; peptidoglycan biosynthesis. Functionally, peptidoglycan polymerase that is essential for cell division. The chain is Probable peptidoglycan glycosyltransferase FtsW from Methylococcus capsulatus (strain ATCC 33009 / NCIMB 11132 / Bath).